The sequence spans 177 residues: MEALILEPSLYTVKAILILDNDGDRLFAKYYDDTYPSVKEQKAFEKNIFNKTHRTDSEIALLEGLTVVYKSSIDLYFYVIGSSYENELMLMTVLNCLFDSLSQMLRKNVEKRALLENMEGLFLAVDEIVDGGVILESDPQQVVHRVALRGEDVPLTEQTVSQVLQSAKEQIKWSLLR.

An N-acetylmethionine modification is found at Met1.

Belongs to the adaptor complexes small subunit family. Oligomeric complex that consists of at least the alpha, beta, beta', gamma, delta, epsilon and zeta subunits.

Its subcellular location is the cytoplasm. It localises to the golgi apparatus membrane. The protein localises to the cytoplasmic vesicle. The protein resides in the COPI-coated vesicle membrane. The coatomer is a cytosolic protein complex that binds to dilysine motifs and reversibly associates with Golgi non-clathrin-coated vesicles, which further mediate biosynthetic protein transport from the ER, via the Golgi up to the trans Golgi network. Coatomer complex is required for budding from Golgi membranes, and is essential for the retrograde Golgi-to-ER transport of dilysine-tagged proteins. The zeta subunit may be involved in regulating the coat assembly and, hence, the rate of biosynthetic protein transport due to its association-dissociation properties with the coatomer complex. This chain is Coatomer subunit zeta-1 (COPZ1), found in Bos taurus (Bovine).